We begin with the raw amino-acid sequence, 415 residues long: Carboxypeptidase B (415 aa).

A signal peptide spans 1 to 13 (MLLLLALVSVALA). A propeptide spans 14 to 108 (HASEEHFDGN…LESQFDSHTR (95 aa)) (activation peptide). A Peptidase M14 domain is found at 116 to 410 (KYNKWETIEA…LAVKYIANYV (295 aa)). C171 and C184 are oxidised to a cystine. H174 and E177 together coordinate Zn(2+). Substrate-binding positions include 174-177 (HARE), R232, and 249-250 (NR). 2 disulfides stabilise this stretch: C243–C266 and C257–C271. H302 lines the Zn(2+) pocket. Substrate is bound by residues 303–304 (SY) and Y354. The active-site Proton donor/acceptor is E376.

The protein belongs to the peptidase M14 family. It depends on Zn(2+) as a cofactor.

The protein localises to the secreted. It localises to the zymogen granule lumen. It carries out the reaction Preferential release of a C-terminal lysine or arginine amino acid.. The sequence is that of Carboxypeptidase B (Cpb1) from Rattus norvegicus (Rat).